Consider the following 259-residue polypeptide: Thrombin-like enzyme gyroxin B1.7 (259 aa).

A signal peptide spans 1 to 18; that stretch reads MVLIRVLANLLILQLSYA. Residues 19 to 259 constitute a propeptide that is removed on maturation; the sequence is QKSSELVIGG…AGNTAVTCPP (241 aa). A Peptidase S1 domain is found at 25-250; sequence VIGGDECNIN…DTEWIQSIIA (226 aa). 5 disulfides stabilise this stretch: Cys-31–Cys-162, Cys-49–Cys-65, Cys-141–Cys-211, Cys-173–Cys-190, and Cys-201–Cys-226. His-64 acts as the Charge relay system in catalysis. N-linked (GlcNAc...) asparagine glycosylation is present at Asn-102. Asp-109 acts as the Charge relay system in catalysis. Ser-205 acts as the Charge relay system in catalysis.

Belongs to the peptidase S1 family. Snake venom subfamily. In terms of assembly, monomer. As to expression, expressed by the venom gland.

It localises to the secreted. In terms of biological role, thrombin-like snake venom serine protease. Displays a specificity similar to trypsin. Releases only fibrinopeptide A in the conversion of fibrinogen to fibrin. Shows coagulant, esterase and amidase activities. Reversibly increases the permeability of the blood brain barrier (BBB) in mice. Induces the barrel rotation syndrome in mice, which is manifested by gyroxin-like, rapid rolling motions. This syndrome may be due to its effect on BBB permeability, and certainly also to other actions affecting endogenous substrates present in the endothelium, nervous tissues or blood. The chain is Thrombin-like enzyme gyroxin B1.7 from Crotalus durissus terrificus (South American rattlesnake).